Reading from the N-terminus, the 144-residue chain is 3-dehydroquinate dehydratase (144 aa).

The active-site Proton acceptor is tyrosine 24. Asparagine 76, histidine 82, and aspartate 89 together coordinate substrate. Catalysis depends on histidine 102, which acts as the Proton donor. Substrate-binding positions include leucine 103–serine 104 and arginine 113.

Belongs to the type-II 3-dehydroquinase family. In terms of assembly, homododecamer.

The enzyme catalyses 3-dehydroquinate = 3-dehydroshikimate + H2O. Its pathway is metabolic intermediate biosynthesis; chorismate biosynthesis; chorismate from D-erythrose 4-phosphate and phosphoenolpyruvate: step 3/7. Its function is as follows. Catalyzes a trans-dehydration via an enolate intermediate. The polypeptide is 3-dehydroquinate dehydratase (Bordetella avium (strain 197N)).